A 770-amino-acid polypeptide reads, in one-letter code: Molybdenum cofactor sulfurase (770 aa).

Lys231 bears the N6-(pyridoxal phosphate)lysine mark. The active site involves Cys395. Residues 601–770 (DWVSRALGVS…TVSGVIEESE (170 aa)) enclose the MOSC domain.

Belongs to the class-V pyridoxal-phosphate-dependent aminotransferase family. MOCOS subfamily. Pyridoxal 5'-phosphate is required as a cofactor.

The enzyme catalyses Mo-molybdopterin + L-cysteine + AH2 = thio-Mo-molybdopterin + L-alanine + A + H2O. Sulfurates the molybdenum cofactor. Sulfation of molybdenum is essential for xanthine dehydrogenase (XDH) and aldehyde oxidase (ADO) enzymes in which molybdenum cofactor is liganded by 1 oxygen and 1 sulfur atom in active form. The polypeptide is Molybdenum cofactor sulfurase (Anopheles gambiae (African malaria mosquito)).